A 679-amino-acid chain; its full sequence is Glycine--tRNA ligase beta subunit (679 aa).

It belongs to the class-II aminoacyl-tRNA synthetase family. As to quaternary structure, tetramer of two alpha and two beta subunits.

The protein resides in the cytoplasm. The enzyme catalyses tRNA(Gly) + glycine + ATP = glycyl-tRNA(Gly) + AMP + diphosphate. In Streptococcus pyogenes serotype M28 (strain MGAS6180), this protein is Glycine--tRNA ligase beta subunit.